The primary structure comprises 56 residues: Large ribosomal subunit protein bL33 (56 aa).

A compositionally biased stretch (basic and acidic residues) spans 1–12 (MATKGGREKIKL). The tract at residues 1 to 28 (MATKGGREKIKLESTAGTGHFYTTSKNK) is disordered. Over residues 15 to 25 (TAGTGHFYTTS) the composition is skewed to polar residues.

The protein belongs to the bacterial ribosomal protein bL33 family.

The chain is Large ribosomal subunit protein bL33 from Albidiferax ferrireducens (strain ATCC BAA-621 / DSM 15236 / T118) (Rhodoferax ferrireducens).